We begin with the raw amino-acid sequence, 171 residues long: Iron-sulfur cluster assembly protein 3 (171 aa).

The N-terminal 49 residues, 1–49 (MLRQTTKRAFLGLASQNPTPFPVVSRLYHPNVIDHYDNPRNVGSFDKND), are a transit peptide targeting the mitochondrion.

The protein belongs to the NifU family. In terms of assembly, component of the core Fe-S cluster (ISC) assembly machinery. The cofactor is [2Fe-2S] cluster. Mostly expressed in flowers and pollen, and, to a lower extent, in leaves and roots.

The protein localises to the mitochondrion matrix. The protein operates within cofactor biosynthesis; iron-sulfur cluster biosynthesis. Its function is as follows. Scaffold protein for the de novo synthesis of iron-sulfur (Fe-S) clusters within mitochondria, which is required for maturation of both mitochondrial and cytoplasmic [2Fe-2S] and [4Fe-4S] proteins. First, a [2Fe-2S] cluster is transiently assembled on the scaffold protein ISCU (ISU1, ISU2 or ISU3). In a second step, the cluster is released from ISCU, transferred to a glutaredoxin, followed by the formation of mitochondrial [2Fe-2S] proteins, the synthesis of [4Fe-4S] clusters and their target-specific insertion into the recipient apoproteins. Cluster assembly on ISCU depends on the function of the cysteine desulfurase complex NFS1-ISD11, which serves as the sulfur donor for cluster synthesis, the iron-binding protein frataxin as the putative iron donor, and the electron transfer chain comprised of ferredoxin reductase and ferredoxin, which receive their electrons from NADH. This is Iron-sulfur cluster assembly protein 3 (ISU3) from Arabidopsis thaliana (Mouse-ear cress).